The primary structure comprises 608 residues: Probable potassium transport system protein Kup (608 aa).

12 consecutive transmembrane segments (helical) span residues 9–29 (LSGV…TSPL), 46–66 (PAAI…VVSV), 99–119 (TPVL…EVVI), 137–157 (PSLD…LFAI), 165–185 (VGKL…VLGL), 213–233 (TSFF…ALYA), 247–267 (WFVV…ALLL), 285–305 (ALLP…QAVI), 337–357 (IYIP…IMSF), 363–383 (LAAA…ILFC), 396–416 (LVAA…AANL), and 419–439 (IFSG…LMTS).

This sequence belongs to the HAK/KUP transporter (TC 2.A.72) family.

Its subcellular location is the cell inner membrane. It carries out the reaction K(+)(in) + H(+)(in) = K(+)(out) + H(+)(out). Functionally, transport of potassium into the cell. Likely operates as a K(+):H(+) symporter. This Aeromonas salmonicida (strain A449) protein is Probable potassium transport system protein Kup.